Here is a 317-residue protein sequence, read N- to C-terminus: Pantothenate kinase (317 aa).

95–102 (GSVAVGKS) provides a ligand contact to ATP.

It belongs to the prokaryotic pantothenate kinase family.

Its subcellular location is the cytoplasm. The enzyme catalyses (R)-pantothenate + ATP = (R)-4'-phosphopantothenate + ADP + H(+). It participates in cofactor biosynthesis; coenzyme A biosynthesis; CoA from (R)-pantothenate: step 1/5. The sequence is that of Pantothenate kinase from Rhodopseudomonas palustris (strain BisB18).